A 122-amino-acid chain; its full sequence is Large ribosomal subunit protein uL14 (122 aa).

The protein belongs to the universal ribosomal protein uL14 family. As to quaternary structure, part of the 50S ribosomal subunit. Forms a cluster with proteins L3 and L19. In the 70S ribosome, L14 and L19 interact and together make contacts with the 16S rRNA in bridges B5 and B8.

Functionally, binds to 23S rRNA. Forms part of two intersubunit bridges in the 70S ribosome. This Chlorobaculum tepidum (strain ATCC 49652 / DSM 12025 / NBRC 103806 / TLS) (Chlorobium tepidum) protein is Large ribosomal subunit protein uL14.